The following is a 215-amino-acid chain: Ependymin-1 (215 aa).

An N-terminal signal peptide occupies residues Met1–Ala20. 2 N-linked (GlcNAc...) asparagine glycosylation sites follow: Asn71 and Asn94.

The protein belongs to the ependymin family. As to quaternary structure, forms disulfide-linked dimers. Different glycosylation variants are known as EPD-beta and EPD-gamma. In terms of processing, binds calcium through the terminal sialic acids. As to expression, EPDs are synthesized in the meninx and secreted in the cerebrospinal fluid.

It is found in the secreted. Its function is as follows. May play a role in neural plasticity. May be involved during axon regeneration. The chain is Ependymin-1 (epd1) from Carassius auratus (Goldfish).